A 455-amino-acid chain; its full sequence is Bifunctional protein GlmU (455 aa).

Residues 1–227 (MGLSVIILAA…CEEVQGVNDR (227 aa)) are pyrophosphorylase. Residues 8–11 (LAAG), Lys-22, Gln-73, 78–79 (GT), 100–102 (YGD), Gly-137, Glu-152, Asn-167, and Asn-225 each bind UDP-N-acetyl-alpha-D-glucosamine. Asp-102 contacts Mg(2+). A Mg(2+)-binding site is contributed by Asn-225. The linker stretch occupies residues 228 to 248 (WELTKLERYYQRLMAKKLSLA). The tract at residues 249–455 (GVTIIDPERF…KGWHRPTKKE (207 aa)) is N-acetyltransferase. Residues Arg-332 and Lys-350 each contribute to the UDP-N-acetyl-alpha-D-glucosamine site. The active-site Proton acceptor is the His-362. UDP-N-acetyl-alpha-D-glucosamine contacts are provided by Tyr-365 and Asn-376. Acetyl-CoA is bound by residues Ala-379, 385-386 (NY), Ser-404, Ala-422, and Arg-439.

The protein in the N-terminal section; belongs to the N-acetylglucosamine-1-phosphate uridyltransferase family. In the C-terminal section; belongs to the transferase hexapeptide repeat family. In terms of assembly, homotrimer. Mg(2+) is required as a cofactor.

It localises to the cytoplasm. The enzyme catalyses alpha-D-glucosamine 1-phosphate + acetyl-CoA = N-acetyl-alpha-D-glucosamine 1-phosphate + CoA + H(+). It catalyses the reaction N-acetyl-alpha-D-glucosamine 1-phosphate + UTP + H(+) = UDP-N-acetyl-alpha-D-glucosamine + diphosphate. It functions in the pathway nucleotide-sugar biosynthesis; UDP-N-acetyl-alpha-D-glucosamine biosynthesis; N-acetyl-alpha-D-glucosamine 1-phosphate from alpha-D-glucosamine 6-phosphate (route II): step 2/2. The protein operates within nucleotide-sugar biosynthesis; UDP-N-acetyl-alpha-D-glucosamine biosynthesis; UDP-N-acetyl-alpha-D-glucosamine from N-acetyl-alpha-D-glucosamine 1-phosphate: step 1/1. It participates in bacterial outer membrane biogenesis; LPS lipid A biosynthesis. Its function is as follows. Catalyzes the last two sequential reactions in the de novo biosynthetic pathway for UDP-N-acetylglucosamine (UDP-GlcNAc). The C-terminal domain catalyzes the transfer of acetyl group from acetyl coenzyme A to glucosamine-1-phosphate (GlcN-1-P) to produce N-acetylglucosamine-1-phosphate (GlcNAc-1-P), which is converted into UDP-GlcNAc by the transfer of uridine 5-monophosphate (from uridine 5-triphosphate), a reaction catalyzed by the N-terminal domain. The chain is Bifunctional protein GlmU from Coxiella burnetii (strain CbuG_Q212) (Coxiella burnetii (strain Q212)).